Here is a 328-residue protein sequence, read N- to C-terminus: Versiconal hemiacetal acetate esterase (328 aa).

The Involved in the stabilization of the negatively charged intermediate by the formation of the oxyanion hole motif lies at 82-84 (HGG). Residues S156, D260, and H290 contribute to the active site.

The protein belongs to the 'GDXG' lipolytic enzyme family.

It carries out the reaction (2S,3S)-versiconal hemiacetal acetate + H2O = (2S-3S)-versiconal hemiacetal + acetate + H(+). It catalyses the reaction (3S)-versiconol acetate + H2O = (S)-versiconol + acetate + H(+). Its pathway is mycotoxin biosynthesis. Its function is as follows. Versiconal hemiacetal acetate esterase; part of the fragmented gene cluster that mediates the biosynthesis of dothistromin (DOTH), a polyketide toxin very similar in structure to the aflatoxin precursor, versicolorin B. The first step of the pathway is the conversion of acetate to norsolorinic acid (NOR) and requires the fatty acid synthase subunits hexA and hexB, as well as the polyketide synthase pksA. PksA combines a hexanoyl starter unit and 7 malonyl-CoA extender units to synthesize the precursor NOR. The hexanoyl starter unit is provided to the acyl-carrier protein (ACP) domain by the fungal fatty acid synthase hexA/hexB. The second step is the conversion of NOR to averantin (AVN) and requires the norsolorinic acid ketoreductase nor1, which catalyzes the dehydration of norsolorinic acid to form (1'S)-averantin. The cytochrome P450 monooxygenase avnA then catalyzes the hydroxylation of AVN to 5'hydroxyaverantin (HAVN). The next step is performed by adhA that transforms HAVN to averufin (AVF). Averufin might then be converted to hydroxyversicolorone by cypX and avfA. Hydroxyversicolorone is further converted versiconal hemiacetal acetate (VHA) by moxY. VHA is then the substrate for the versiconal hemiacetal acetate esterase est1 to yield versiconal (VAL). Versicolorin B synthase vbsA then converts VAL to versicolorin B (VERB) by closing the bisfuran ring. Then, the activity of the versicolorin B desaturase verB leads to versicolorin A (VERA). DotB, a predicted chloroperoxidase, may perform epoxidation of the A-ring of VERA. Alternatively, a cytochrome P450, such as cypX or avnA could catalyze this step. It is also possible that another, uncharacterized, cytochrome P450 enzyme is responsible for this step. Opening of the epoxide could potentially be achieved by the epoxide hydrolase epoA. However, epoA seems not to be required for DOTH biosynthesis, but other epoxide hydrolases may have the ability to complement this hydrolysis. Alternatively, opening of the epoxide ring could be achieved non-enzymatically. The next step is the deoxygenation of ring A to yield the 5,8-dihydroxyanthraquinone which is most likely catalyzed by the NADPH dehydrogenase encoded by ver1. The last stages of DOTH biosynthesis are proposed to involve hydroxylation of the bisfuran. OrdB and norB might have oxidative roles here. An alternative possibility is that cytochrome P450 monoogenases such as avnA and cypX might perform these steps in addition to previously proposed steps. The sequence is that of Versiconal hemiacetal acetate esterase from Dothistroma septosporum (strain NZE10 / CBS 128990) (Red band needle blight fungus).